The primary structure comprises 328 residues: Alanine racemase (328 aa).

Catalysis depends on K33, which acts as the Proton acceptor; specific for D-alanine. The residue at position 33 (K33) is an N6-(pyridoxal phosphate)lysine. R118 provides a ligand contact to substrate. The active-site Proton acceptor; specific for L-alanine is Y237. M283 is a binding site for substrate.

This sequence belongs to the alanine racemase family. The cofactor is pyridoxal 5'-phosphate.

The catalysed reaction is L-alanine = D-alanine. It participates in amino-acid biosynthesis; D-alanine biosynthesis; D-alanine from L-alanine: step 1/1. Catalyzes the interconversion of L-alanine and D-alanine. May also act on other amino acids. The protein is Alanine racemase (alr) of Campylobacter jejuni (strain RM1221).